The chain runs to 106 residues: MVHTPYHSDFVTVCWFLYLIRTADNRLYTGITTDVPRRFRQHQAGKGAKALRGKGDLQLAFSHEVGEHSLALRLEYRVKQLTKREKERLVAGEDAFETLLARLKDD.

Residues 13–88 form the GIY-YIG domain; sequence VCWFLYLIRT…KQLTKREKER (76 aa).

The protein belongs to the UPF0213 family.

The polypeptide is UPF0213 protein KPN78578_35340 (Klebsiella pneumoniae subsp. pneumoniae (strain ATCC 700721 / MGH 78578)).